We begin with the raw amino-acid sequence, 132 residues long: Glycine-rich protein 3 (132 aa).

A signal peptide spans 1–20 (MRYAVLLAVVLLLGAFTAEA).

In terms of tissue distribution, prismatic layer of shell (at protein level). Expressed primarily in the mantle with highest level in the mantle edge and lower level in the mantle pallium.

The protein resides in the secreted. The polypeptide is Glycine-rich protein 3 (Pinctada maxima (Silver-lipped pearl oyster)).